The following is a 392-amino-acid chain: Succinyl-diaminopimelate desuccinylase (392 aa).

Histidine 78 contributes to the Zn(2+) binding site. Aspartate 80 is an active-site residue. Aspartate 110 is a Zn(2+) binding site. Glutamate 145 functions as the Proton acceptor in the catalytic mechanism. Residues glutamate 146, glutamate 174, and histidine 363 each coordinate Zn(2+).

Belongs to the peptidase M20A family. DapE subfamily. In terms of assembly, homodimer. It depends on Zn(2+) as a cofactor. The cofactor is Co(2+).

It catalyses the reaction N-succinyl-(2S,6S)-2,6-diaminopimelate + H2O = (2S,6S)-2,6-diaminopimelate + succinate. Its pathway is amino-acid biosynthesis; L-lysine biosynthesis via DAP pathway; LL-2,6-diaminopimelate from (S)-tetrahydrodipicolinate (succinylase route): step 3/3. In terms of biological role, catalyzes the hydrolysis of N-succinyl-L,L-diaminopimelic acid (SDAP), forming succinate and LL-2,6-diaminopimelate (DAP), an intermediate involved in the bacterial biosynthesis of lysine and meso-diaminopimelic acid, an essential component of bacterial cell walls. The sequence is that of Succinyl-diaminopimelate desuccinylase from Methylobacterium radiotolerans (strain ATCC 27329 / DSM 1819 / JCM 2831 / NBRC 15690 / NCIMB 10815 / 0-1).